Here is a 428-residue protein sequence, read N- to C-terminus: Cytochrome P450-terp (428 aa).

Cysteine 377 is a heme binding site.

This sequence belongs to the cytochrome P450 family. It depends on heme as a cofactor.

The protein localises to the cytoplasm. In terms of biological role, catalyzes the hydroxylation of alpha-terpineol. The sequence is that of Cytochrome P450-terp (cyp108) from Pseudomonas sp.